We begin with the raw amino-acid sequence, 152 residues long: Large ribosomal subunit protein bL9 (152 aa).

Belongs to the bacterial ribosomal protein bL9 family.

Its function is as follows. Binds to the 23S rRNA. The protein is Large ribosomal subunit protein bL9 of Prochlorococcus marinus (strain NATL1A).